Here is a 75-residue protein sequence, read N- to C-terminus: uncharacterized protein (75 aa).

The helical transmembrane segment at 12-32 (LKVFILFTGFTALFYYAMIWV) threads the bilayer.

Its subcellular location is the cell membrane. This is an uncharacterized protein from Bacillus subtilis (strain 168).